We begin with the raw amino-acid sequence, 269 residues long: MIYQSKRNFQNHPFHLVSPSPWPLFTSISLFILTTATVLFMHGFEGFQYLVPVAVINVMYVMGLWFRDVISEGTYLGNHTNAVQKGLNLGVGLFIISEVFFFLAIFWAFFHSAISPSVELGAQWPPLGIQGINPFELPLLNTIILLSSGVTITYAHHSLIQGNRKGALYGTVVTILLAIVFTFFQGVEYTVSSFTISDSVYGSCFYFGTGFHGLHVIIGTAFLAVGLWRLAAYHLTDHHHLGYESGILYWHFVDVVWLFLYISVYYWGY.

7 consecutive transmembrane segments (helical) span residues 24–44, 46–66, 90–110, 138–160, 167–187, 207–227, and 247–267; these read LFTS…MHGF, GFQY…GLWF, GVGL…WAFF, PLLN…HSLI, ALYG…FQGV, FGTG…AVGL, and ILYW…VYYW.

The protein belongs to the cytochrome c oxidase subunit 3 family. Component of the cytochrome c oxidase (complex IV, CIV), a multisubunit enzyme composed of a catalytic core of 3 subunits and several supernumerary subunits. The complex exists as a monomer or a dimer and forms supercomplexes (SCs) in the inner mitochondrial membrane with ubiquinol-cytochrome c oxidoreductase (cytochrome b-c1 complex, complex III, CIII).

It localises to the mitochondrion inner membrane. It carries out the reaction 4 Fe(II)-[cytochrome c] + O2 + 8 H(+)(in) = 4 Fe(III)-[cytochrome c] + 2 H2O + 4 H(+)(out). Its function is as follows. Component of the cytochrome c oxidase, the last enzyme in the mitochondrial electron transport chain which drives oxidative phosphorylation. The respiratory chain contains 3 multisubunit complexes succinate dehydrogenase (complex II, CII), ubiquinol-cytochrome c oxidoreductase (cytochrome b-c1 complex, complex III, CIII) and cytochrome c oxidase (complex IV, CIV), that cooperate to transfer electrons derived from NADH and succinate to molecular oxygen, creating an electrochemical gradient over the inner membrane that drives transmembrane transport and the ATP synthase. Cytochrome c oxidase is the component of the respiratory chain that catalyzes the reduction of oxygen to water. Electrons originating from reduced cytochrome c in the intermembrane space (IMS) are transferred via the dinuclear copper A center (CU(A)) of subunit 2 and heme A of subunit 1 to the active site in subunit 1, a binuclear center (BNC) formed by heme A3 and copper B (CU(B)). The BNC reduces molecular oxygen to 2 water molecules using 4 electrons from cytochrome c in the IMS and 4 protons from the mitochondrial matrix. The polypeptide is Cytochrome c oxidase subunit 3 (cox3) (Emericella nidulans (Aspergillus nidulans)).